Consider the following 876-residue polypeptide: Alanine--tRNA ligase (876 aa).

K74 carries the post-translational modification N6-acetyllysine. Residues H564, H568, C666, and H670 each contribute to the Zn(2+) site.

Belongs to the class-II aminoacyl-tRNA synthetase family. Homotetramer. Zn(2+) serves as cofactor.

The protein resides in the cytoplasm. It catalyses the reaction tRNA(Ala) + L-alanine + ATP = L-alanyl-tRNA(Ala) + AMP + diphosphate. Catalyzes the attachment of alanine to tRNA(Ala) in a two-step reaction: alanine is first activated by ATP to form Ala-AMP and then transferred to the acceptor end of tRNA(Ala). Also edits incorrectly charged Ser-tRNA(Ala) and Gly-tRNA(Ala) via its editing domain. The sequence is that of Alanine--tRNA ligase from Escherichia coli O157:H7.